A 439-amino-acid polypeptide reads, in one-letter code: GTPase Der (439 aa).

2 EngA-type G domains span residues P3–S167 and T176–S351. GTP contacts are provided by residues G9–S16, D56–F60, N119–D122, G182–S189, D229–I233, and N294–D297. Residues K352 to D436 form the KH-like domain.

This sequence belongs to the TRAFAC class TrmE-Era-EngA-EngB-Septin-like GTPase superfamily. EngA (Der) GTPase family. In terms of assembly, associates with the 50S ribosomal subunit.

In terms of biological role, GTPase that plays an essential role in the late steps of ribosome biogenesis. The chain is GTPase Der from Geobacter metallireducens (strain ATCC 53774 / DSM 7210 / GS-15).